Reading from the N-terminus, the 80-residue chain is Large ribosomal subunit protein bL31B (80 aa).

The protein belongs to the bacterial ribosomal protein bL31 family. Type B subfamily. In terms of assembly, part of the 50S ribosomal subunit.

This is Large ribosomal subunit protein bL31B from Stenotrophomonas maltophilia (strain K279a).